We begin with the raw amino-acid sequence, 468 residues long: ATP synthase subunit beta (468 aa).

155-162 is a binding site for ATP; that stretch reads GGAGVGKT.

The protein belongs to the ATPase alpha/beta chains family. As to quaternary structure, F-type ATPases have 2 components, CF(1) - the catalytic core - and CF(0) - the membrane proton channel. CF(1) has five subunits: alpha(3), beta(3), gamma(1), delta(1), epsilon(1). CF(0) has three main subunits: a(1), b(2) and c(9-12). The alpha and beta chains form an alternating ring which encloses part of the gamma chain. CF(1) is attached to CF(0) by a central stalk formed by the gamma and epsilon chains, while a peripheral stalk is formed by the delta and b chains.

Its subcellular location is the cell membrane. The enzyme catalyses ATP + H2O + 4 H(+)(in) = ADP + phosphate + 5 H(+)(out). In terms of biological role, produces ATP from ADP in the presence of a proton gradient across the membrane. The catalytic sites are hosted primarily by the beta subunits. This Streptococcus pyogenes serotype M6 (strain ATCC BAA-946 / MGAS10394) protein is ATP synthase subunit beta.